The primary structure comprises 450 residues: Molybdate-anion transporter (450 aa).

Helical transmembrane passes span 1–21 (MLVT…GLEL), 38–58 (FLQF…ADWL), 79–99 (ILYV…SSLV), 128–148 (FVLL…FSAF), 167–187 (IPAT…AAGV), 191–211 (AVAS…IPLL), 249–269 (VLLL…FVFL), 278–298 (GAPL…GSSL), 311–331 (PMHL…MLTF), 344–364 (FIAF…MSFL), 376–396 (GVLN…LLVL), and 409–429 (FSIC…LFTV).

The protein belongs to the major facilitator superfamily.

It is found in the cell membrane. Mediates high-affinity intracellular uptake of the rare oligo-element molybdenum. The chain is Molybdate-anion transporter (Mfsd5) from Mus musculus (Mouse).